The sequence spans 359 residues: Probable dual-specificity RNA methyltransferase RlmN (359 aa).

The active-site Proton acceptor is the Glu-91. Residues Gln-97–Arg-329 form the Radical SAM core domain. The cysteines at positions 104 and 340 are disulfide-linked. Residues Cys-111, Cys-115, and Cys-118 each coordinate [4Fe-4S] cluster. Residues Gly-163–Glu-164, Ser-195, Ser-218–His-220, and Asn-296 contribute to the S-adenosyl-L-methionine site. The active-site S-methylcysteine intermediate is Cys-340.

Belongs to the radical SAM superfamily. RlmN family. Requires [4Fe-4S] cluster as cofactor.

The protein localises to the cytoplasm. The enzyme catalyses adenosine(2503) in 23S rRNA + 2 reduced [2Fe-2S]-[ferredoxin] + 2 S-adenosyl-L-methionine = 2-methyladenosine(2503) in 23S rRNA + 5'-deoxyadenosine + L-methionine + 2 oxidized [2Fe-2S]-[ferredoxin] + S-adenosyl-L-homocysteine. It catalyses the reaction adenosine(37) in tRNA + 2 reduced [2Fe-2S]-[ferredoxin] + 2 S-adenosyl-L-methionine = 2-methyladenosine(37) in tRNA + 5'-deoxyadenosine + L-methionine + 2 oxidized [2Fe-2S]-[ferredoxin] + S-adenosyl-L-homocysteine. Its function is as follows. Specifically methylates position 2 of adenine 2503 in 23S rRNA and position 2 of adenine 37 in tRNAs. This Streptococcus pyogenes serotype M3 (strain ATCC BAA-595 / MGAS315) protein is Probable dual-specificity RNA methyltransferase RlmN.